Here is a 246-residue protein sequence, read N- to C-terminus: Bis(5'-nucleosyl)-tetraphosphatase PrpE [asymmetrical] (246 aa).

The protein belongs to the PrpE family. Ni(2+) is required as a cofactor.

It carries out the reaction P(1),P(4)-bis(5'-guanosyl) tetraphosphate + H2O = GMP + GTP + 2 H(+). In terms of biological role, asymmetrically hydrolyzes Ap4p to yield AMP and ATP. The sequence is that of Bis(5'-nucleosyl)-tetraphosphatase PrpE [asymmetrical] from Bacillus cereus (strain AH820).